Consider the following 406-residue polypeptide: Biofilm regulatory protein A (406 aa).

The N-terminal stretch at 1-26 (MKIGKKILIMLVTIFLTSLVALGVYA) is a signal peptide. Low complexity predominate over residues 347 to 397 (SSSASDYSSSGNYSGSSSDYGSSSSYGSNSSSGSSSDYSGQNSYNQGNYQQ). Residues 347 to 406 (SSSASDYSSSGNYSGSSSDYGSSSSYGSNSSSGSSSDYSGQNSYNQGNYQQPAAGTGIGN) are disordered.

The protein belongs to the LytR/CpsA/Psr (LCP) family.

Its subcellular location is the cell envelope. Involved in biofilm formation, cell division, autolysis and the regulation of acid and oxidative stress tolerance. May be associated with systemic virulence in blood. In Streptococcus mutans serotype c (strain ATCC 700610 / UA159), this protein is Biofilm regulatory protein A (brpA).